Here is a 280-residue protein sequence, read N- to C-terminus: UBX domain-containing protein 10 (280 aa).

Positions 41–94 (SAKGRTRPSLQKSQGVEVCAHHIPSPPPAIPYELPSSQKPGACAPKSPNQGASD) are disordered. At serine 87 the chain carries Phosphoserine. Residues 194–271 (DQEPRLLLAV…RIPHKSVLGI (78 aa)) enclose the UBX domain.

Belongs to the UBXN10 family. As to quaternary structure, interacts with CLUAP1; the interaction is direct and mediates interaction with the intraflagellar transport complex B (IFT-B). Interacts with VCP; the interaction is direct.

It is found in the cell projection. Its subcellular location is the cilium. Functionally, VCP/p97-binding protein required for ciliogenesis. Acts as a tethering factor that facilitates recruitment of VCP/p97 to the intraflagellar transport complex B (IFT-B) in cilia. UBX domain-containing proteins act as tethering factors for VCP/p97 and may specify substrate specificity of VCP/p97. The protein is UBX domain-containing protein 10 of Homo sapiens (Human).